The following is a 207-amino-acid chain: uncharacterized protein (207 aa).

This sequence to M.leprae ML1660.

This is an uncharacterized protein from Mycobacterium tuberculosis (strain CDC 1551 / Oshkosh).